Here is a 261-residue protein sequence, read N- to C-terminus: Undecaprenyl-diphosphatase (261 aa).

The next 6 helical transmembrane spans lie at 39-59 (NVLLFDILVHLGTLVPLLIIF), 76-96 (LLIIAGTVPTALIGLGFKDFF), 99-119 (LFVSGSTLGIEFIITGLILWL), 173-193 (AAKFSFLLSIPAILGAAVLDL), 206-226 (IDLMPFIVGFFAAMLSGYFAV), and 238-258 (LTWFSYYVWILGVTILVLQAA).

The protein belongs to the UppP family.

Its subcellular location is the cell membrane. It catalyses the reaction di-trans,octa-cis-undecaprenyl diphosphate + H2O = di-trans,octa-cis-undecaprenyl phosphate + phosphate + H(+). Catalyzes the dephosphorylation of undecaprenyl diphosphate (UPP). Confers resistance to bacitracin. The protein is Undecaprenyl-diphosphatase of Carboxydothermus hydrogenoformans (strain ATCC BAA-161 / DSM 6008 / Z-2901).